An 81-amino-acid polypeptide reads, in one-letter code: ATP synthase subunit c, chloroplastic (81 aa).

A run of 2 helical transmembrane segments spans residues 3–23 (PLIA…ASIG) and 57–77 (LAFM…LLFA).

Belongs to the ATPase C chain family. In terms of assembly, F-type ATPases have 2 components, F(1) - the catalytic core - and F(0) - the membrane proton channel. F(1) has five subunits: alpha(3), beta(3), gamma(1), delta(1), epsilon(1). F(0) has four main subunits: a(1), b(1), b'(1) and c(10-14). The alpha and beta chains form an alternating ring which encloses part of the gamma chain. F(1) is attached to F(0) by a central stalk formed by the gamma and epsilon chains, while a peripheral stalk is formed by the delta, b and b' chains.

The protein localises to the plastid. It is found in the chloroplast thylakoid membrane. F(1)F(0) ATP synthase produces ATP from ADP in the presence of a proton or sodium gradient. F-type ATPases consist of two structural domains, F(1) containing the extramembraneous catalytic core and F(0) containing the membrane proton channel, linked together by a central stalk and a peripheral stalk. During catalysis, ATP synthesis in the catalytic domain of F(1) is coupled via a rotary mechanism of the central stalk subunits to proton translocation. Its function is as follows. Key component of the F(0) channel; it plays a direct role in translocation across the membrane. A homomeric c-ring of between 10-14 subunits forms the central stalk rotor element with the F(1) delta and epsilon subunits. The polypeptide is ATP synthase subunit c, chloroplastic (Pisum sativum (Garden pea)).